Here is a 346-residue protein sequence, read N- to C-terminus: Hydroxymethylglutaryl-CoA synthase (346 aa).

Position 28 (D28) interacts with (3S)-3-hydroxy-3-methylglutaryl-CoA. E80 functions as the Proton donor/acceptor in the catalytic mechanism. Residues C112 and T153 each coordinate (3S)-3-hydroxy-3-methylglutaryl-CoA. C112 serves as the catalytic Acyl-thioester intermediate. Position 199 (R199) interacts with CoA. 2 residues coordinate (3S)-3-hydroxy-3-methylglutaryl-CoA: T201 and H234. The Proton donor/acceptor role is filled by H234. Residue K239 participates in CoA binding. The (3S)-3-hydroxy-3-methylglutaryl-CoA site is built by K243, N266, and S296.

It belongs to the thiolase-like superfamily. Archaeal HMG-CoA synthase family. Interacts with acetoacetyl-CoA thiolase that catalyzes the precedent step in the pathway and with a DUF35 protein. The acetoacetyl-CoA thiolase/HMG-CoA synthase complex channels the intermediate via a fused CoA-binding site, which allows for efficient coupling of the endergonic thiolase reaction with the exergonic HMGCS reaction.

The enzyme catalyses acetoacetyl-CoA + acetyl-CoA + H2O = (3S)-3-hydroxy-3-methylglutaryl-CoA + CoA + H(+). Its pathway is metabolic intermediate biosynthesis; (R)-mevalonate biosynthesis; (R)-mevalonate from acetyl-CoA: step 2/3. In terms of biological role, catalyzes the condensation of acetyl-CoA with acetoacetyl-CoA to form 3-hydroxy-3-methylglutaryl-CoA (HMG-CoA). Functions in the mevalonate (MVA) pathway leading to isopentenyl diphosphate (IPP), a key precursor for the biosynthesis of isoprenoid compounds that are building blocks of archaeal membrane lipids. The sequence is that of Hydroxymethylglutaryl-CoA synthase from Methanothermobacter thermautotrophicus (strain ATCC 29096 / DSM 1053 / JCM 10044 / NBRC 100330 / Delta H) (Methanobacterium thermoautotrophicum).